A 426-amino-acid chain; its full sequence is Glutamate-1-semialdehyde 2,1-aminomutase (426 aa).

K265 carries the post-translational modification N6-(pyridoxal phosphate)lysine.

Belongs to the class-III pyridoxal-phosphate-dependent aminotransferase family. HemL subfamily. Homodimer. Requires pyridoxal 5'-phosphate as cofactor.

The protein localises to the cytoplasm. It carries out the reaction (S)-4-amino-5-oxopentanoate = 5-aminolevulinate. Its pathway is porphyrin-containing compound metabolism; protoporphyrin-IX biosynthesis; 5-aminolevulinate from L-glutamyl-tRNA(Glu): step 2/2. The chain is Glutamate-1-semialdehyde 2,1-aminomutase from Escherichia coli O9:H4 (strain HS).